The following is a 157-amino-acid chain: DNA gyrase inhibitor (157 aa).

Belongs to the DNA gyrase inhibitor family. Interacts with DNA gyrase.

It localises to the cytoplasm. Its function is as follows. Inhibits the supercoiling activity of DNA gyrase. Acts by inhibiting DNA gyrase at an early step, prior to (or at the step of) binding of DNA by the gyrase. It protects cells against toxins that target DNA gyrase, by inhibiting activity of these toxins and reducing the formation of lethal double-strand breaks in the cell. The sequence is that of DNA gyrase inhibitor from Cronobacter turicensis (strain DSM 18703 / CCUG 55852 / LMG 23827 / z3032).